Reading from the N-terminus, the 644-residue chain is Fidgetin-like protein 2 (644 aa).

2 disordered regions span residues 1–36 and 285–323; these read MHWTPEHAQPLNQWPEQHLDVSSTTPSPAHKLELPP and AADGASYPAADDTECRGNGFRSKPPGATEDGTGKYGGGG. The span at 10–27 shows a compositional bias: polar residues; it reads PLNQWPEQHLDVSSTTPS. Residues 285 to 294 show a composition bias toward low complexity; it reads AADGASYPAA. ATP contacts are provided by residues A390 and 430–435; that span reads GCGKAL.

It belongs to the AAA ATPase family. Mg(2+) serves as cofactor.

It is found in the cytoplasm. It localises to the cell cortex. It carries out the reaction ATP + H2O = ADP + phosphate + H(+). Its function is as follows. Microtubule-severing enzyme that negatively regulates cell migration and wound healing. In migrating cells, targets dynamic microtubules (MTs) at the leading edge and severs them, thereby suppressing motility. Microtubule severing releases ARHGEF2 which activates RHOA, which in turn regulates focal ahesion turnover via focal adhesion kinase, as opposed to F-actin polymerization, to suppress cell motility. Negative regulator of axon regeneration that suppresses axonal growth by selectively severing dynamic MTs in the distal axon shaft and growth cone. Contributes to proper cell branching during endothelial and neuronal development. This chain is Fidgetin-like protein 2 (Fignl2), found in Mus musculus (Mouse).